The following is a 461-amino-acid chain: Chromosomal replication initiator protein DnaA (461 aa).

Residues 1–84 (MAVSLWQQCI…RFDIGSRPSA (84 aa)) form a domain I, interacts with DnaA modulators region. The domain II stretch occupies residues 84-124 (AKKFEPAPVATVRAPNTQTKATVGTYFNTQAEPIANANHRS). The domain III, AAA+ region stretch occupies residues 125 to 341 (NINPTYQFDN…GALNRVIANA (217 aa)). 4 residues coordinate ATP: G169, G171, K172, and T173. Positions 342-461 (NFTGRPITID…YANLIRTLSS (120 aa)) are domain IV, binds dsDNA.

This sequence belongs to the DnaA family. Oligomerizes as a right-handed, spiral filament on DNA at oriC.

It is found in the cytoplasm. Its function is as follows. Plays an essential role in the initiation and regulation of chromosomal replication. ATP-DnaA binds to the origin of replication (oriC) to initiate formation of the DNA replication initiation complex once per cell cycle. Binds the DnaA box (a 9 base pair repeat at the origin) and separates the double-stranded (ds)DNA. Forms a right-handed helical filament on oriC DNA; dsDNA binds to the exterior of the filament while single-stranded (ss)DNA is stabiized in the filament's interior. The ATP-DnaA-oriC complex binds and stabilizes one strand of the AT-rich DNA unwinding element (DUE), permitting loading of DNA polymerase. After initiation quickly degrades to an ADP-DnaA complex that is not apt for DNA replication. Binds acidic phospholipids. The protein is Chromosomal replication initiator protein DnaA of Shewanella putrefaciens (strain CN-32 / ATCC BAA-453).